A 354-amino-acid polypeptide reads, in one-letter code: Thiamine thiazole synthase 1, chloroplastic (354 aa).

A chloroplast-targeting transit peptide spans Met1 to Ser43. Residues Ala96, Glu116–Gln117, Gly124, and Val190 each bind substrate. 2,3-didehydroalanine (Cys) is present on Cys219. Substrate contacts are provided by residues Asp221, His236, Met288, and Arg298–Gly300.

This sequence belongs to the THI4 family. As to quaternary structure, homooctamer. Requires Fe cation as cofactor. In terms of processing, during the catalytic reaction, a sulfide is transferred from Cys-219 to a reaction intermediate, generating a dehydroalanine residue.

The protein resides in the plastid. It is found in the chloroplast. The enzyme catalyses [ADP-thiazole synthase]-L-cysteine + glycine + NAD(+) = [ADP-thiazole synthase]-dehydroalanine + ADP-5-ethyl-4-methylthiazole-2-carboxylate + nicotinamide + 3 H2O + 2 H(+). Its function is as follows. Involved in biosynthesis of the thiamine precursor thiazole. Catalyzes the conversion of NAD and glycine to adenosine diphosphate 5-(2-hydroxyethyl)-4-methylthiazole-2-carboxylic acid (ADT), an adenylated thiazole intermediate. The reaction includes an iron-dependent sulfide transfer from a conserved cysteine residue of the protein to a thiazole intermediate. The enzyme can only undergo a single turnover, which suggests it is a suicide enzyme. May have additional roles in adaptation to various stress conditions and in DNA damage tolerance. The polypeptide is Thiamine thiazole synthase 1, chloroplastic (Sorghum bicolor (Sorghum)).